The primary structure comprises 737 residues: Zinc finger protein 184 (737 aa).

Residues 28 to 99 (VTFKDVVVNF…DSCIPVGPLE (72 aa)) enclose the KRAB domain. Ser-117 is modified (phosphoserine). A Glycyl lysine isopeptide (Lys-Gly) (interchain with G-Cter in SUMO2) cross-link involves residue Lys-185. C2H2-type zinc fingers lie at residues 201–223 (CKCN…QRTH), 229–251 (YKCN…QRIH), 257–279 (YKCD…QRIH), 285–307 (YKCD…QRIH), 313–335 (YTCT…QKIH), 341–363 (FKCE…QKIH), 369–391 (YKCN…HMIH), 397–419 (YECN…QKTH), 425–447 (YDCA…LKIH), 453–475 (YKCS…RRIH), 481–503 (FECS…QKTH), 509–531 (YECK…ERIH), 537–559 (YQCH…KKIH), 565–587 (YKCN…KRIH), 593–615 (YACP…QKTH), 621–643 (YQCN…QRIH), and 649–671 (YKCS…RSTH). Residues 677–698 (YNSECPQTFSQSTYLTQHQKIH) form a C2H2-type 18; degenerate zinc finger. A C2H2-type 19 zinc finger spans residues 704–726 (LGCEDCEKAFQCHSALTKHQRLH).

Belongs to the krueppel C2H2-type zinc-finger protein family.

The protein resides in the nucleus. Functionally, may be involved in transcriptional regulation. The sequence is that of Zinc finger protein 184 (Zfp184) from Mus musculus (Mouse).